Here is a 98-residue protein sequence, read N- to C-terminus: Large ribosomal subunit protein uL23 (98 aa).

The protein belongs to the universal ribosomal protein uL23 family. In terms of assembly, part of the 50S ribosomal subunit. Contacts protein L29, and trigger factor when it is bound to the ribosome.

One of the early assembly proteins it binds 23S rRNA. One of the proteins that surrounds the polypeptide exit tunnel on the outside of the ribosome. Forms the main docking site for trigger factor binding to the ribosome. The sequence is that of Large ribosomal subunit protein uL23 from Lactobacillus johnsonii (strain CNCM I-12250 / La1 / NCC 533).